The sequence spans 1041 residues: Isoleucine--tRNA ligase (1041 aa).

Positions 53-63 (PFANGLPHYGH) match the 'HIGH' region motif. The short motif at 619–623 (KMSKS) is the 'KMSKS' region element. Residue Lys-622 coordinates ATP.

This sequence belongs to the class-I aminoacyl-tRNA synthetase family. IleS type 2 subfamily. Monomer. It depends on Zn(2+) as a cofactor.

It is found in the cytoplasm. It carries out the reaction tRNA(Ile) + L-isoleucine + ATP = L-isoleucyl-tRNA(Ile) + AMP + diphosphate. In terms of biological role, catalyzes the attachment of isoleucine to tRNA(Ile). As IleRS can inadvertently accommodate and process structurally similar amino acids such as valine, to avoid such errors it has two additional distinct tRNA(Ile)-dependent editing activities. One activity is designated as 'pretransfer' editing and involves the hydrolysis of activated Val-AMP. The other activity is designated 'posttransfer' editing and involves deacylation of mischarged Val-tRNA(Ile). This is Isoleucine--tRNA ligase from Mycobacterium bovis (strain ATCC BAA-935 / AF2122/97).